Here is a 212-residue protein sequence, read N- to C-terminus: ATP-dependent Clp protease proteolytic subunit (212 aa).

Residue Ser-109 is the Nucleophile of the active site. Residue His-134 is part of the active site.

Belongs to the peptidase S14 family. In terms of assembly, fourteen ClpP subunits assemble into 2 heptameric rings which stack back to back to give a disk-like structure with a central cavity, resembling the structure of eukaryotic proteasomes.

It localises to the cytoplasm. It carries out the reaction Hydrolysis of proteins to small peptides in the presence of ATP and magnesium. alpha-casein is the usual test substrate. In the absence of ATP, only oligopeptides shorter than five residues are hydrolyzed (such as succinyl-Leu-Tyr-|-NHMec, and Leu-Tyr-Leu-|-Tyr-Trp, in which cleavage of the -Tyr-|-Leu- and -Tyr-|-Trp bonds also occurs).. Cleaves peptides in various proteins in a process that requires ATP hydrolysis. Has a chymotrypsin-like activity. Plays a major role in the degradation of misfolded proteins. The sequence is that of ATP-dependent Clp protease proteolytic subunit from Bdellovibrio bacteriovorus (strain ATCC 15356 / DSM 50701 / NCIMB 9529 / HD100).